Consider the following 142-residue polypeptide: ATP synthase epsilon chain (142 aa).

Belongs to the ATPase epsilon chain family. In terms of assembly, F-type ATPases have 2 components, CF(1) - the catalytic core - and CF(0) - the membrane proton channel. CF(1) has five subunits: alpha(3), beta(3), gamma(1), delta(1), epsilon(1). CF(0) has three main subunits: a, b and c.

It localises to the cell inner membrane. Produces ATP from ADP in the presence of a proton gradient across the membrane. This Shewanella denitrificans (strain OS217 / ATCC BAA-1090 / DSM 15013) protein is ATP synthase epsilon chain.